The primary structure comprises 490 residues: Serine/threonine-protein kinase PBL35 (490 aa).

2 disordered regions span residues 1–39 (MGFD…RNSE) and 80–103 (SAIV…SNAE). Residues 14-39 (SKTSNENEKKKKKRRRKKNNNVRNSE) adopt a coiled-coil conformation. The segment covering 23-33 (KKKKRRRKKNN) has biased composition (basic residues). Positions 94 to 103 (SSTTTTSNAE) are enriched in low complexity. In terms of domain architecture, Protein kinase spans 136–422 (FRPESLLGEG…VEVLKPLPHL (287 aa)). Residues 142–150 (LGEGGFGCV) and lysine 174 contribute to the ATP site. At tyrosine 219 the chain carries Phosphotyrosine. The active-site Proton acceptor is aspartate 269. Residues serine 273 and serine 303 each carry the phosphoserine modification. Phosphothreonine occurs at positions 304 and 309. Tyrosine 317 is modified (phosphotyrosine). The interval 442-490 (AGSGSGSGRGFGSRNGQPVFRTLSSPHGQAGSSPYRHQIPSPKPKGATT) is disordered. Residues 444-454 (SGSGSGRGFGS) show a composition bias toward gly residues. Positions 463-473 (TLSSPHGQAGS) are enriched in polar residues.

It belongs to the protein kinase superfamily. Ser/Thr protein kinase family. Interacts with SD129. Phosphorylated by SD129 in response to the pathogen-associated molecular pattern (PAMP) 3-OH-C10:0, a medium-chain 3-hydroxy fatty acid.

It is found in the cell membrane. The enzyme catalyses L-seryl-[protein] + ATP = O-phospho-L-seryl-[protein] + ADP + H(+). The catalysed reaction is L-threonyl-[protein] + ATP = O-phospho-L-threonyl-[protein] + ADP + H(+). Its function is as follows. Involved in chitin-triggered immune signaling and is required for reactive oxygen species (ROS) production. Acts downstream of SD129 in defense signaling triggered by the pathogen-associated molecular pattern (PAMP) 3-OH-C10:0, a medium-chain 3-hydroxy fatty acid. This is Serine/threonine-protein kinase PBL35 from Arabidopsis thaliana (Mouse-ear cress).